The sequence spans 351 residues: uncharacterized protein (351 aa).

A signal peptide spans 1–27 (MKNKKRVLIASSLSCAILLLSAATTQA). The interval 27-71 (ANSAHKDSQDQNKKEHVDKSQQKDKRNVTNKDKNSTAPDDIGKNG) is disordered. Over residues 30–60 (AHKDSQDQNKKEHVDKSQQKDKRNVTNKDKN) the composition is skewed to basic and acidic residues.

It belongs to the aerolysin family.

This is an uncharacterized protein from Staphylococcus aureus (strain USA300).